The primary structure comprises 64 residues: Large ribosomal subunit protein bL35 (64 aa).

Belongs to the bacterial ribosomal protein bL35 family.

The sequence is that of Large ribosomal subunit protein bL35 from Carboxydothermus hydrogenoformans (strain ATCC BAA-161 / DSM 6008 / Z-2901).